Reading from the N-terminus, the 236-residue chain is 2-C-methyl-D-erythritol 4-phosphate cytidylyltransferase (236 aa).

This sequence belongs to the IspD/TarI cytidylyltransferase family. IspD subfamily. As to quaternary structure, homodimer.

It carries out the reaction 2-C-methyl-D-erythritol 4-phosphate + CTP + H(+) = 4-CDP-2-C-methyl-D-erythritol + diphosphate. Its pathway is isoprenoid biosynthesis; isopentenyl diphosphate biosynthesis via DXP pathway; isopentenyl diphosphate from 1-deoxy-D-xylulose 5-phosphate: step 2/6. Functionally, catalyzes the formation of 4-diphosphocytidyl-2-C-methyl-D-erythritol from CTP and 2-C-methyl-D-erythritol 4-phosphate (MEP). This chain is 2-C-methyl-D-erythritol 4-phosphate cytidylyltransferase, found in Cronobacter sakazakii (strain ATCC BAA-894) (Enterobacter sakazakii).